The primary structure comprises 59 residues: Large ribosomal subunit protein bL32 (59 aa).

The tract at residues 1 to 59 is disordered; that stretch reads MAVQQNKKSPSKRGMHRSHDHLSVAPLAVEPTTGETHLRHHVSPNGYYRGRKVIKTKND. Composition is skewed to basic residues over residues 9-19 and 49-59; these read SPSKRGMHRSH and RGRKVIKTKND.

This sequence belongs to the bacterial ribosomal protein bL32 family.

This is Large ribosomal subunit protein bL32 from Cupriavidus metallidurans (strain ATCC 43123 / DSM 2839 / NBRC 102507 / CH34) (Ralstonia metallidurans).